The chain runs to 229 residues: Potassium/proton antiporter CemA (229 aa).

The next 3 helical transmembrane spans lie at L7–F27, I106–L126, and I189–I209.

Belongs to the CemA family.

The protein localises to the plastid. The protein resides in the chloroplast inner membrane. It carries out the reaction K(+)(in) + H(+)(out) = K(+)(out) + H(+)(in). Contributes to K(+)/H(+) antiport activity by supporting proton efflux to control proton extrusion and homeostasis in chloroplasts in a light-dependent manner to modulate photosynthesis. Prevents excessive induction of non-photochemical quenching (NPQ) under continuous-light conditions. Indirectly promotes efficient inorganic carbon uptake into chloroplasts. The polypeptide is Potassium/proton antiporter CemA (Liriodendron tulipifera (Tuliptree)).